Consider the following 64-residue polypeptide: Phylloxin-B1 (64 aa).

A signal peptide spans 1-22 (MVFLKKSLLLVLFVGLVSLSIC). The propeptide occupies 23 to 42 (EENKREEHEEIEENKEKAEE). A Glutamine amide modification is found at Gln-63.

As to expression, expressed by the skin glands.

It is found in the secreted. In terms of biological role, antimicrobial peptide against the wall-less bacteria A.laidlawii and S.melliferum, the Gram-positive bacteria B.megaterium KM, C.glutamicum ATCC 27853 and M.luteus ATCC 27853 and the Gram-negative-bacteria R.meliloti 102F34 and E.coli K12. This chain is Phylloxin-B1, found in Phyllomedusa bicolor (Two-colored leaf frog).